The primary structure comprises 694 residues: Elongation factor G (694 aa).

The tr-type G domain maps to 9-288 (SKIRNIGIMA…VIVKWLPSPK (280 aa)). Residues 18 to 25 (AHIDAGKT), 82 to 86 (DTPGH), and 136 to 139 (NKMD) each bind GTP.

It belongs to the TRAFAC class translation factor GTPase superfamily. Classic translation factor GTPase family. EF-G/EF-2 subfamily.

The protein localises to the cytoplasm. Functionally, catalyzes the GTP-dependent ribosomal translocation step during translation elongation. During this step, the ribosome changes from the pre-translocational (PRE) to the post-translocational (POST) state as the newly formed A-site-bound peptidyl-tRNA and P-site-bound deacylated tRNA move to the P and E sites, respectively. Catalyzes the coordinated movement of the two tRNA molecules, the mRNA and conformational changes in the ribosome. The sequence is that of Elongation factor G from Chlamydia felis (strain Fe/C-56) (Chlamydophila felis).